A 2007-amino-acid polypeptide reads, in one-letter code: Structural maintenance of chromosomes flexible hinge domain-containing protein 1 (2007 aa).

An N-acetylalanine modification is found at A2. The tract at residues 111–702 is ATPase activity domain; sequence TKERIDFLPH…LSVTWPEGDE (592 aa). S833 is modified (phosphoserine). K1350 bears the N6-acetyllysine mark. K1375 is covalently cross-linked (Glycyl lysine isopeptide (Lys-Gly) (interchain with G-Cter in SUMO2)). At T1500 the chain carries Phosphothreonine. The SMC hinge domain occupies 1721-1848; it reads GDILGKIAHL…DNLDAANHYR (128 aa). K1803 bears the N6-succinyllysine mark. Residue S1975 is modified to Phosphoserine. The disordered stretch occupies residues 1984 to 2007; the sequence is PIPTKRMRRESTRQNRRPKGDVPN.

Belongs to the SMC family. Highly divergent. Homodimer; homodimerizes via its SMC hinge domain. Interacts with LRIF1. In terms of processing, sumoylated with SUMO1. In terms of tissue distribution, during embryogenesis, specifically expressed in immature olfactory sensory neurons.

The protein resides in the chromosome. It carries out the reaction ATP + H2O = ADP + phosphate + H(+). Non-canonical member of the structural maintenance of chromosomes (SMC) protein family that plays a key role in epigenetic silencing by regulating chromatin architecture. Promotes heterochromatin formation in both autosomes and chromosome X, probably by mediating the merge of chromatin compartments. Plays a key role in chromosome X inactivation in females by promoting the spreading of heterochromatin. Recruited to inactivated chromosome X by Xist RNA and acts by mediating the merge of chromatin compartments: promotes random chromatin interactions that span the boundaries of existing structures, leading to create a compartment-less architecture typical of inactivated chromosome X. Required to facilitate Xist RNA spreading. Also required for silencing of a subset of clustered autosomal loci in somatic cells, such as the DUX4 locus. Has ATPase activity; may participate in structural manipulation of chromatin in an ATP-dependent manner as part of its role in gene expression regulation. Also plays a role in DNA repair: localizes to sites of DNA double-strand breaks in response to DNA damage to promote the repair of DNA double-strand breaks. Acts by promoting non-homologous end joining (NHEJ) and inhibiting homologous recombination (HR) repair. Required during preimplantation development, probably acts by regulating chromatin architecture. This chain is Structural maintenance of chromosomes flexible hinge domain-containing protein 1, found in Mus musculus (Mouse).